We begin with the raw amino-acid sequence, 328 residues long: Peroxisomal adenine nucleotide transporter 1 (328 aa).

The next 6 membrane-spanning stretches (helical) occupy residues 1-21 (MLTL…NIAV), 78-98 (TVTT…YTFI), 128-148 (LVLG…MAVV), 185-202 (LRTG…YASF), 226-246 (FILG…LIVA), and 277-297 (WKGV…LFAF). Solcar repeat units follow at residues 1–101 (MLTL…IRKS), 122–208 (PSTI…LKEV), and 220–304 (LSAV…LTKS).

Belongs to the mitochondrial carrier (TC 2.A.29) family.

The protein resides in the peroxisome membrane. Functionally, adenine nucleotide transporter involved in the uniport of ATP and adenine nucleotide hetero-exchange transport between the cytosol and the peroxisomal lumen. This transport is accompanied by a proton transport from the peroxisomal lumen to the cytosol. Transport of ATP into the peroxisome is required for beta-oxidation of medium-chain fatty acids. Required for growth on medium-chain fatty acids, pH gradient formation in peroxisomes and for normal peroxisome proliferation. The chain is Peroxisomal adenine nucleotide transporter 1 (ANT1) from Saccharomyces cerevisiae (strain ATCC 204508 / S288c) (Baker's yeast).